The primary structure comprises 952 residues: Meiosis-specific coiled-coil domain-containing protein MEIOC (952 aa).

3 disordered regions span residues M1–E23, Q609–L629, and V933–H952. The segment covering Y617–D627 has biased composition (basic and acidic residues). A compositionally biased stretch (polar residues) spans S936 to H952.

Interacts with YTHDC2; binds transcript that regulate the mitotic cell cycle inhibiting progression into metaphase, thereby allowing meiotic prophase to proceed normally. Interacts with RBM46. As to expression, expressed in fetal ovaries. Expressed in testis.

The protein resides in the cytoplasm. The protein localises to the nucleus. In terms of biological role, is required for meiosis completion in both male and female germ cells. Confers stability to numerous meiotic mRNAs in gonads allowing proper initiation and progression into meiosis prophase I. The function may involve YTHDC2 and is independent of induction by retinoic acid (RA). Maintains an extended meiotic prophase I by properly promoting the transition from a mitotic to a meiotic cell cycle program by binding transcripts through its interaction with YTHDC2 that regulate the mitotic cell cycle. The protein is Meiosis-specific coiled-coil domain-containing protein MEIOC of Homo sapiens (Human).